Consider the following 216-residue polypeptide: ATP phosphoribosyltransferase (216 aa).

This sequence belongs to the ATP phosphoribosyltransferase family. Short subfamily. Heteromultimer composed of HisG and HisZ subunits.

It localises to the cytoplasm. The catalysed reaction is 1-(5-phospho-beta-D-ribosyl)-ATP + diphosphate = 5-phospho-alpha-D-ribose 1-diphosphate + ATP. It functions in the pathway amino-acid biosynthesis; L-histidine biosynthesis; L-histidine from 5-phospho-alpha-D-ribose 1-diphosphate: step 1/9. Functionally, catalyzes the condensation of ATP and 5-phosphoribose 1-diphosphate to form N'-(5'-phosphoribosyl)-ATP (PR-ATP). Has a crucial role in the pathway because the rate of histidine biosynthesis seems to be controlled primarily by regulation of HisG enzymatic activity. The sequence is that of ATP phosphoribosyltransferase from Nitrosomonas eutropha (strain DSM 101675 / C91 / Nm57).